The chain runs to 364 residues: MNPLLERLCARLSDTIPPGTETPYASPSHARTEEAPWSGITGEEALAVARLPASDILDILAVAQAVRSARKGPLATTCGIVNAKSGRCGEDCAFCAQSSHHDTGAPVHALLGPDALLRHAEELARAGVRRFGIVTSGNALSEREFDAVCHAARLLRDRVDIGLCASLGQLATGSAESGNRGERARRLKDAGISSYHHNLETARSFFPQVCTTHPYDDDIATVREAARAGLRTCCGGILGLGETWEHRVELALTLRELDVDSIPLNFLHPVPGTRLGHRSPLPPMEALRAIAVFRLLHPQRDILVCGGRETTLGQWQSWVFAAGANGLMVGNYLTTAGRALAEDMEMLAALGVGEIPRNGEEARA.

The disordered stretch occupies residues 14–36 (DTIPPGTETPYASPSHARTEEAP). The Radical SAM core domain maps to 70–308 (RKGPLATTCG…QRDILVCGGR (239 aa)). Residues Cys-88, Cys-92, and Cys-95 each contribute to the [4Fe-4S] cluster site. [2Fe-2S] cluster is bound by residues Cys-164 and Cys-233.

The protein belongs to the radical SAM superfamily. Biotin synthase family. In terms of assembly, homodimer. [4Fe-4S] cluster is required as a cofactor. Requires [2Fe-2S] cluster as cofactor.

It carries out the reaction (4R,5S)-dethiobiotin + (sulfur carrier)-SH + 2 reduced [2Fe-2S]-[ferredoxin] + 2 S-adenosyl-L-methionine = (sulfur carrier)-H + biotin + 2 5'-deoxyadenosine + 2 L-methionine + 2 oxidized [2Fe-2S]-[ferredoxin]. It participates in cofactor biosynthesis; biotin biosynthesis; biotin from 7,8-diaminononanoate: step 2/2. Functionally, catalyzes the conversion of dethiobiotin (DTB) to biotin by the insertion of a sulfur atom into dethiobiotin via a radical-based mechanism. The polypeptide is Biotin synthase (Nitratidesulfovibrio vulgaris (strain DSM 19637 / Miyazaki F) (Desulfovibrio vulgaris)).